Here is a 161-residue protein sequence, read N- to C-terminus: Small ribosomal subunit protein uS19 (161 aa).

Residues 1–19 are compositionally biased toward basic residues; it reads MARQKKYSGKGGARKKNKQ. The segment at 1–26 is disordered; the sequence is MARQKKYSGKGGARKKNKQKQNVAPR.

It belongs to the universal ribosomal protein uS19 family.

Functionally, protein S19 forms a complex with S13 that binds strongly to the 16S ribosomal RNA. The protein is Small ribosomal subunit protein uS19 of Methanococcus maripaludis (strain DSM 14266 / JCM 13030 / NBRC 101832 / S2 / LL).